Reading from the N-terminus, the 604-residue chain is UvrABC system protein C (604 aa).

Residues 15 to 92 (DLPGCYLMKN…IQKHQPYFNI (78 aa)) enclose the GIY-YIG domain. Residues 197–232 (ETVKKQLTKRMDQAAADLEFERAAELRDQLNYIEMT) form the UVR domain.

Belongs to the UvrC family. In terms of assembly, interacts with UvrB in an incision complex.

It is found in the cytoplasm. The UvrABC repair system catalyzes the recognition and processing of DNA lesions. UvrC both incises the 5' and 3' sides of the lesion. The N-terminal half is responsible for the 3' incision and the C-terminal half is responsible for the 5' incision. This chain is UvrABC system protein C, found in Lactiplantibacillus plantarum (strain ATCC BAA-793 / NCIMB 8826 / WCFS1) (Lactobacillus plantarum).